The primary structure comprises 144 residues: Fluoride-specific ion channel FluC 1 (144 aa).

4 helical membrane passes run 11–31 (LIYI…YYLG), 44–64 (LATL…TTYI), 74–94 (VITG…TFSV), and 107–127 (IAFL…GLGY). Na(+)-binding residues include G84 and T87.

Belongs to the fluoride channel Fluc/FEX (TC 1.A.43) family.

The protein localises to the cell membrane. It carries out the reaction fluoride(in) = fluoride(out). With respect to regulation, na(+) is not transported, but it plays an essential structural role and its presence is essential for fluoride channel function. In terms of biological role, fluoride-specific ion channel. Important for reducing fluoride concentration in the cell, thus reducing its toxicity. This chain is Fluoride-specific ion channel FluC 1, found in Bacillus cereus (strain ATCC 14579 / DSM 31 / CCUG 7414 / JCM 2152 / NBRC 15305 / NCIMB 9373 / NCTC 2599 / NRRL B-3711).